The sequence spans 123 residues: Small ribosomal subunit protein bS16 (123 aa).

The interval 86–123 (PVRAEQTKQPQPKAKAQQRAKDQAERDAAAAAEAAAGE) is disordered. A compositionally biased stretch (low complexity) spans 93–102 (KQPQPKAKAQ). The span at 104–113 (RAKDQAERDA) shows a compositional bias: basic and acidic residues. Positions 114-123 (AAAAEAAAGE) are enriched in low complexity.

Belongs to the bacterial ribosomal protein bS16 family.

The chain is Small ribosomal subunit protein bS16 from Paramagnetospirillum magneticum (strain ATCC 700264 / AMB-1) (Magnetospirillum magneticum).